The following is a 76-amino-acid chain: Exodeoxyribonuclease 7 small subunit (76 aa).

The protein belongs to the XseB family. As to quaternary structure, heterooligomer composed of large and small subunits.

The protein localises to the cytoplasm. The enzyme catalyses Exonucleolytic cleavage in either 5'- to 3'- or 3'- to 5'-direction to yield nucleoside 5'-phosphates.. Its function is as follows. Bidirectionally degrades single-stranded DNA into large acid-insoluble oligonucleotides, which are then degraded further into small acid-soluble oligonucleotides. This Staphylococcus aureus (strain MRSA252) protein is Exodeoxyribonuclease 7 small subunit.